A 118-amino-acid chain; its full sequence is V-type proton ATPase subunit F (118 aa).

It belongs to the V-ATPase F subunit family. V-ATPase is a heteromultimeric enzyme composed of a peripheral catalytic V1 complex (components A to H) attached to an integral membrane V0 proton pore complex (components: a, c, c', c'', d, e, f and VOA1).

Its subcellular location is the vacuole membrane. Its function is as follows. Subunit of the V1 complex of vacuolar(H+)-ATPase (V-ATPase), a multisubunit enzyme composed of a peripheral complex (V1) that hydrolyzes ATP and a membrane integral complex (V0) that translocates protons. V-ATPase is responsible for acidifying and maintaining the pH of intracellular compartments. The chain is V-type proton ATPase subunit F from Saccharomyces cerevisiae (strain ATCC 204508 / S288c) (Baker's yeast).